A 92-amino-acid chain; its full sequence is Small ribosomal subunit protein uS19c (92 aa).

Belongs to the universal ribosomal protein uS19 family.

It localises to the plastid. The protein localises to the chloroplast. Functionally, protein S19 forms a complex with S13 that binds strongly to the 16S ribosomal RNA. The protein is Small ribosomal subunit protein uS19c of Gossypium barbadense (Sea Island cotton).